A 571-amino-acid chain; its full sequence is Adenine deaminase (571 aa).

This sequence belongs to the metallo-dependent hydrolases superfamily. Adenine deaminase family. Mn(2+) is required as a cofactor.

It catalyses the reaction adenine + H2O + H(+) = hypoxanthine + NH4(+). The sequence is that of Adenine deaminase from Dehalococcoides mccartyi (strain ATCC BAA-2266 / KCTC 15142 / 195) (Dehalococcoides ethenogenes (strain 195)).